The following is a 403-amino-acid chain: MSGRVGDLSPKQEEALAKFRENVQDVLPALPNPDDYFLLRWLRARSFDLQKSEAMLRKHVEFRKQKDIDKIISWQPPEVIQQYLSGGRCGYDLDGCPVWYDIIGPLDAKGLLFSASKQDLLRTKMRDCELLLQECTQQTAKLGKKIETITMIYDCEGLGLKHLWKPAVEAYGEFLTMFEENYPETLKRLFVVKAPKLFPVAYNLIKPFLSEDTRKKIMVLGANWKEVLLKHISPDQLPVEYGGTMTDPDGNPKCKSKINYGGDIPKQYYVRDQVKQQYEHSVQISRGSSHQVEYEILFPGCVLRWQFMSEGSDVGFGIFLKTKMGERQRAGEMTEVLPNQRYNSHMVPEDGTLTCSEPGIYVLRFDNTYSFIHAKKVSFTVEVLLPDKAAEEKLNQQGAVTPK.

2 positions are modified to N6-succinyllysine: Lys11 and Lys51. One can recognise a CRAL-TRIO domain in the interval 76–249 (PPEVIQQYLS…EYGGTMTDPD (174 aa)). N6-succinyllysine is present on residues Lys253 and Lys257. A GOLD domain is found at 275–383 (KQQYEHSVQI…AKKVSFTVEV (109 aa)). Lys393 is modified (N6-succinyllysine).

As to quaternary structure, monomer. In terms of tissue distribution, widely expressed. High expression in liver and small intestine.

It is found in the cytoplasm. It localises to the nucleus. Its function is as follows. Carrier protein. Binds to some hydrophobic molecules and promotes their transfer between the different cellular sites. Binds with high affinity to alpha-tocopherol. Also binds with a weaker affinity to other tocopherols and to tocotrienols. May have a transcriptional activatory activity via its association with alpha-tocopherol. Probably recognizes and binds some squalene structure, suggesting that it may regulate cholesterol biosynthesis by increasing the transfer of squalene to a metabolic active pool in the cell. This Rattus norvegicus (Rat) protein is SEC14-like protein 2 (Sec14l2).